We begin with the raw amino-acid sequence, 554 residues long: Methyl-coenzyme M reductase II subunit alpha (554 aa).

Q151 lines the coenzyme F430 pocket. Coenzyme B is bound by residues R229, 260–261 (KH), and R274. Coenzyme M is bound by residues Y336 and Y447.

It belongs to the methyl-coenzyme M reductase alpha subunit family. In terms of assembly, MCR is a hexamer of two alpha, two beta, and two gamma chains, forming a dimer of heterotrimers. The cofactor is coenzyme F430.

It catalyses the reaction coenzyme B + methyl-coenzyme M = methane + coenzyme M-coenzyme B heterodisulfide. It participates in one-carbon metabolism; methyl-coenzyme M reduction; methane from methyl-coenzyme M: step 1/1. In terms of biological role, component of the methyl-coenzyme M reductase (MCR) I that catalyzes the reductive cleavage of methyl-coenzyme M (CoM-S-CH3 or 2-(methylthio)ethanesulfonate) using coenzyme B (CoB or 7-mercaptoheptanoylthreonine phosphate) as reductant which results in the production of methane and the mixed heterodisulfide of CoB and CoM (CoM-S-S-CoB). This is the final step in methanogenesis. The chain is Methyl-coenzyme M reductase II subunit alpha (mrtA) from Methanothermus fervidus (strain ATCC 43054 / DSM 2088 / JCM 10308 / V24 S).